We begin with the raw amino-acid sequence, 695 residues long: Elongation factor G (695 aa).

Residues 8–282 (KDTRNIGIMA…AIVDYMPAPI (275 aa)) enclose the tr-type G domain. GTP contacts are provided by residues 17–24 (AHIDAGKT), 81–85 (DTPGH), and 135–138 (NKMD). The segment at 285–304 (PDIKGVDPQTDEPTTRKSSD) is disordered.

The protein belongs to the TRAFAC class translation factor GTPase superfamily. Classic translation factor GTPase family. EF-G/EF-2 subfamily.

Its subcellular location is the cytoplasm. Catalyzes the GTP-dependent ribosomal translocation step during translation elongation. During this step, the ribosome changes from the pre-translocational (PRE) to the post-translocational (POST) state as the newly formed A-site-bound peptidyl-tRNA and P-site-bound deacylated tRNA move to the P and E sites, respectively. Catalyzes the coordinated movement of the two tRNA molecules, the mRNA and conformational changes in the ribosome. This chain is Elongation factor G, found in Finegoldia magna (strain ATCC 29328 / DSM 20472 / WAL 2508) (Peptostreptococcus magnus).